We begin with the raw amino-acid sequence, 438 residues long: Putative F-box/FBD/LRR-repeat protein At2g05300 (438 aa).

Residues 13 to 59 (EDRISQLPDPLLTQILNLLPTEEAVKTSVLSTRWRTLWLWVPNLELS) enclose the F-box domain. LRR repeat units lie at residues 135 to 166 (CDSL…RLKD), 167 to 192 (IVFH…KIDV), 235 to 261 (CLII…DISL), and 318 to 346 (YVTL…ILER). Positions 362-409 (SMSSVPECLLTSLEFVEFKAPICGLGPEMMLVWYFLKNSPTLKKLTLP) constitute an FBD domain.

This Arabidopsis thaliana (Mouse-ear cress) protein is Putative F-box/FBD/LRR-repeat protein At2g05300.